The chain runs to 208 residues: Small ribosomal subunit protein uS4 (208 aa).

Positions R99–L165 constitute an S4 RNA-binding domain.

This sequence belongs to the universal ribosomal protein uS4 family. Part of the 30S ribosomal subunit. Contacts protein S5. The interaction surface between S4 and S5 is involved in control of translational fidelity.

In terms of biological role, one of the primary rRNA binding proteins, it binds directly to 16S rRNA where it nucleates assembly of the body of the 30S subunit. Functionally, with S5 and S12 plays an important role in translational accuracy. The polypeptide is Small ribosomal subunit protein uS4 (Desulfitobacterium hafniense (strain Y51)).